Here is a 365-residue protein sequence, read N- to C-terminus: Peptide chain release factor 2 (365 aa).

At glutamine 252 the chain carries N5-methylglutamine.

This sequence belongs to the prokaryotic/mitochondrial release factor family. Post-translationally, methylated by PrmC. Methylation increases the termination efficiency of RF2.

The protein resides in the cytoplasm. In terms of biological role, peptide chain release factor 2 directs the termination of translation in response to the peptide chain termination codons UGA and UAA. This Pasteurella multocida (strain Pm70) protein is Peptide chain release factor 2.